Here is a 354-residue protein sequence, read N- to C-terminus: Holliday junction branch migration complex subunit RuvB (354 aa).

Positions 5 to 197 (TDDFSAADLP…FGIVARLEFY (193 aa)) are large ATPase domain (RuvB-L). ATP is bound by residues L36, R37, G78, K81, T82, T83, 144–146 (EDY), R187, Y197, and R234. T82 contacts Mg(2+). Residues 198 to 268 (TAEELGRIVR…IANKALAMLD (71 aa)) form a small ATPAse domain (RuvB-S) region. The head domain (RuvB-H) stretch occupies residues 271–354 (PQGFDVMDRK…PPVSGNDMFT (84 aa)). DNA-binding residues include R307, R326, and R331.

This sequence belongs to the RuvB family. As to quaternary structure, homohexamer. Forms an RuvA(8)-RuvB(12)-Holliday junction (HJ) complex. HJ DNA is sandwiched between 2 RuvA tetramers; dsDNA enters through RuvA and exits via RuvB. An RuvB hexamer assembles on each DNA strand where it exits the tetramer. Each RuvB hexamer is contacted by two RuvA subunits (via domain III) on 2 adjacent RuvB subunits; this complex drives branch migration. In the full resolvosome a probable DNA-RuvA(4)-RuvB(12)-RuvC(2) complex forms which resolves the HJ.

The protein localises to the cytoplasm. The enzyme catalyses ATP + H2O = ADP + phosphate + H(+). Its function is as follows. The RuvA-RuvB-RuvC complex processes Holliday junction (HJ) DNA during genetic recombination and DNA repair, while the RuvA-RuvB complex plays an important role in the rescue of blocked DNA replication forks via replication fork reversal (RFR). RuvA specifically binds to HJ cruciform DNA, conferring on it an open structure. The RuvB hexamer acts as an ATP-dependent pump, pulling dsDNA into and through the RuvAB complex. RuvB forms 2 homohexamers on either side of HJ DNA bound by 1 or 2 RuvA tetramers; 4 subunits per hexamer contact DNA at a time. Coordinated motions by a converter formed by DNA-disengaged RuvB subunits stimulates ATP hydrolysis and nucleotide exchange. Immobilization of the converter enables RuvB to convert the ATP-contained energy into a lever motion, pulling 2 nucleotides of DNA out of the RuvA tetramer per ATP hydrolyzed, thus driving DNA branch migration. The RuvB motors rotate together with the DNA substrate, which together with the progressing nucleotide cycle form the mechanistic basis for DNA recombination by continuous HJ branch migration. Branch migration allows RuvC to scan DNA until it finds its consensus sequence, where it cleaves and resolves cruciform DNA. In Polaromonas sp. (strain JS666 / ATCC BAA-500), this protein is Holliday junction branch migration complex subunit RuvB.